The following is a 328-amino-acid chain: Tetraacyldisaccharide 4'-kinase (328 aa).

Thr55–Thr62 contacts ATP.

Belongs to the LpxK family.

It carries out the reaction a lipid A disaccharide + ATP = a lipid IVA + ADP + H(+). It functions in the pathway glycolipid biosynthesis; lipid IV(A) biosynthesis; lipid IV(A) from (3R)-3-hydroxytetradecanoyl-[acyl-carrier-protein] and UDP-N-acetyl-alpha-D-glucosamine: step 6/6. Transfers the gamma-phosphate of ATP to the 4'-position of a tetraacyldisaccharide 1-phosphate intermediate (termed DS-1-P) to form tetraacyldisaccharide 1,4'-bis-phosphate (lipid IVA). The chain is Tetraacyldisaccharide 4'-kinase from Escherichia coli O139:H28 (strain E24377A / ETEC).